A 237-amino-acid polypeptide reads, in one-letter code: MLRSCTAGLRSIWALRGRREGAPRLSMDLQPARRLFSTEKVIHKDWALPNPSWSKDLKLLFDQFMKKCEDGSWERLPSYKRRSTQESEDFKTYFLDPKLVEEERLSQAQLFTRGFEDGLGFEYVIFKNNDEKRTVCLFQGGPYLQGVPGLLHGGAMATMIDIALGSCTGGAVMTANLNINFKRPVPLCSVVVINSQLDKLEGRKLFLSCNVRSVDEKTLYSEATGLFIKLDPEKSST.

A mitochondrion-targeting transit peptide spans 1 to 36 (MLRSCTAGLRSIWALRGRREGAPRLSMDLQPARRLF). Ser37 carries the post-translational modification Phosphoserine. Lys55, Lys66, and Lys98 each carry N6-succinyllysine. The Proton donor/acceptor role is filled by Asp161. Substrate contacts are provided by residues Asn180, Lys182, and 203-204 (RK). Residue Lys204 is modified to N6-succinyllysine.

The protein belongs to the THEM4/THEM5 thioesterase family. As to quaternary structure, homodimer and homotetramer. Interacts with AKT1 in the cytosol. Phosphorylated.

The protein resides in the cell membrane. The protein localises to the cell projection. It is found in the ruffle membrane. Its subcellular location is the cytoplasm. It localises to the mitochondrion. The protein resides in the mitochondrion inner membrane. The protein localises to the mitochondrion intermembrane space. The catalysed reaction is hexadecanoyl-CoA + H2O = hexadecanoate + CoA + H(+). The enzyme catalyses octanoyl-CoA + H2O = octanoate + CoA + H(+). It catalyses the reaction decanoyl-CoA + H2O = decanoate + CoA + H(+). It carries out the reaction dodecanoyl-CoA + H2O = dodecanoate + CoA + H(+). The catalysed reaction is tetradecanoyl-CoA + H2O = tetradecanoate + CoA + H(+). The enzyme catalyses (9Z)-octadecenoyl-CoA + H2O = (9Z)-octadecenoate + CoA + H(+). It catalyses the reaction (5Z,8Z,11Z,14Z)-eicosatetraenoyl-CoA + H2O = (5Z,8Z,11Z,14Z)-eicosatetraenoate + CoA + H(+). Its function is as follows. Has acyl-CoA thioesterase activity towards medium and long-chain (C14 to C18) fatty acyl-CoA substrates, and probably plays a role in mitochondrial fatty acid metabolism. Plays a role in the apoptotic process, possibly via its regulation of AKT1 activity. The polypeptide is Acyl-coenzyme A thioesterase THEM4 (THEM4) (Bos taurus (Bovine)).